Here is a 566-residue protein sequence, read N- to C-terminus: KsdD-like steroid dehydrogenase MT0809 (566 aa).

An FAD-binding site is contributed by 23 to 54; it reads DAIVVGAGLAGLVAACELADRGLRVLILDQEN.

The protein belongs to the FAD-dependent oxidoreductase 2 family. Requires FAD as cofactor.

The protein operates within lipid metabolism; steroid biosynthesis. Functionally, able to catalyze the elimination of the C-1 and C-2 hydrogen atoms of the A-ring from the polycyclic ring structure of 3-ketosteroids. In Mycobacterium tuberculosis (strain CDC 1551 / Oshkosh), this protein is KsdD-like steroid dehydrogenase MT0809.